Consider the following 251-residue polypeptide: Adenosylcobinamide-GDP ribazoletransferase (251 aa).

The next 5 membrane-spanning stretches (helical) occupy residues 44–64, 114–134, 143–163, 177–197, and 198–218; these read LVGLLAGLVCAGPFLLGLLAG, IGAFGVLGIVFGVLGQVVLAH, GALVWAPVLGRAACVVLAACV, AGATHMTVLFCAGVTAATGVA, and LAGPPAVLAAALPCACAVVWL.

It belongs to the CobS family. Mg(2+) is required as a cofactor.

Its subcellular location is the cell inner membrane. The catalysed reaction is alpha-ribazole + adenosylcob(III)inamide-GDP = adenosylcob(III)alamin + GMP + H(+). It catalyses the reaction alpha-ribazole 5'-phosphate + adenosylcob(III)inamide-GDP = adenosylcob(III)alamin 5'-phosphate + GMP + H(+). It participates in cofactor biosynthesis; adenosylcobalamin biosynthesis; adenosylcobalamin from cob(II)yrinate a,c-diamide: step 7/7. Joins adenosylcobinamide-GDP and alpha-ribazole to generate adenosylcobalamin (Ado-cobalamin). Also synthesizes adenosylcobalamin 5'-phosphate from adenosylcobinamide-GDP and alpha-ribazole 5'-phosphate. This Nitratidesulfovibrio vulgaris (strain DSM 19637 / Miyazaki F) (Desulfovibrio vulgaris) protein is Adenosylcobinamide-GDP ribazoletransferase.